Reading from the N-terminus, the 486-residue chain is Ribosomal RNA small subunit methyltransferase F (486 aa).

Residues 124 to 130 (ASAPGSK), E148, D175, and D193 each bind S-adenosyl-L-methionine. The active-site Nucleophile is C246.

Belongs to the class I-like SAM-binding methyltransferase superfamily. RsmB/NOP family.

Its subcellular location is the cytoplasm. It carries out the reaction cytidine(1407) in 16S rRNA + S-adenosyl-L-methionine = 5-methylcytidine(1407) in 16S rRNA + S-adenosyl-L-homocysteine + H(+). Its function is as follows. Specifically methylates the cytosine at position 1407 (m5C1407) of 16S rRNA. The chain is Ribosomal RNA small subunit methyltransferase F from Shewanella baltica (strain OS223).